The chain runs to 563 residues: Benzaldehyde lyase (563 aa).

Belongs to the TPP enzyme family. The cofactor is a metal cation. Thiamine diphosphate serves as cofactor.

It catalyses the reaction benzoin = 2 benzaldehyde. Its function is as follows. Cleavage of benzoin-anisoin acyloin linkage. This is Benzaldehyde lyase (bznB) from Pseudomonas fluorescens.